The following is a 274-amino-acid chain: Shikimate dehydrogenase (NADP(+)) (274 aa).

Shikimate-binding positions include 14–16 and Thr-60; that span reads SKS. Lys-64 acts as the Proton acceptor in catalysis. Glu-76 lines the NADP(+) pocket. Asn-85 and Asp-101 together coordinate shikimate. NADP(+)-binding positions include 126-130, 150-155, and Met-214; these read GAGGA and NRTARK. Position 216 (Tyr-216) interacts with shikimate. Gly-238 lines the NADP(+) pocket.

The protein belongs to the shikimate dehydrogenase family. As to quaternary structure, homodimer.

It carries out the reaction shikimate + NADP(+) = 3-dehydroshikimate + NADPH + H(+). Its pathway is metabolic intermediate biosynthesis; chorismate biosynthesis; chorismate from D-erythrose 4-phosphate and phosphoenolpyruvate: step 4/7. Involved in the biosynthesis of the chorismate, which leads to the biosynthesis of aromatic amino acids. Catalyzes the reversible NADPH linked reduction of 3-dehydroshikimate (DHSA) to yield shikimate (SA). The polypeptide is Shikimate dehydrogenase (NADP(+)) (Pseudomonas aeruginosa (strain ATCC 15692 / DSM 22644 / CIP 104116 / JCM 14847 / LMG 12228 / 1C / PRS 101 / PAO1)).